The sequence spans 97 residues: Putative septation protein SpoVG (97 aa).

Belongs to the SpoVG family.

Functionally, essential for sporulation. Interferes with or is a negative regulator of the pathway leading to asymmetric septation. The sequence is that of Putative septation protein SpoVG from Bacillus cereus (strain 03BB102).